Consider the following 365-residue polypeptide: tRNA/tmRNA (uracil-C(5))-methyltransferase (365 aa).

S-adenosyl-L-methionine-binding residues include Q189, Y217, N222, E238, and D298. Residue C323 is the Nucleophile of the active site. E357 (proton acceptor) is an active-site residue.

It belongs to the class I-like SAM-binding methyltransferase superfamily. RNA M5U methyltransferase family. TrmA subfamily.

The enzyme catalyses uridine(54) in tRNA + S-adenosyl-L-methionine = 5-methyluridine(54) in tRNA + S-adenosyl-L-homocysteine + H(+). The catalysed reaction is uridine(341) in tmRNA + S-adenosyl-L-methionine = 5-methyluridine(341) in tmRNA + S-adenosyl-L-homocysteine + H(+). Dual-specificity methyltransferase that catalyzes the formation of 5-methyluridine at position 54 (m5U54) in all tRNAs, and that of position 341 (m5U341) in tmRNA (transfer-mRNA). In Shewanella baltica (strain OS155 / ATCC BAA-1091), this protein is tRNA/tmRNA (uracil-C(5))-methyltransferase.